The primary structure comprises 238 residues: Tetraspanin-8 (238 aa).

Residues 1–9 (MAGVNVCIK) are Cytoplasmic-facing. The chain crosses the membrane as a helical span at residues 10–33 (CSMFIFNFVFWLCGAIILSVAISI). The Extracellular segment spans residues 34–57 (RAGKIGQEILAPGDADLNLFIAVN). A helical membrane pass occupies residues 58–72 (ILIFVGAVIMILGFL). Residues 73-83 (GCCGAMKENQF) lie on the Cytoplasmic side of the membrane. A helical transmembrane segment spans residues 84–109 (MMILFFVGLLMILLLQVAAGIVATTR). Residues 110 to 206 (KSKTEQALNK…ASISQMFSKR (97 aa)) are Extracellular-facing. Asparagine 118 is a glycosylation site (N-linked (GlcNAc...) asparagine). A helical transmembrane segment spans residues 207–231 (LFIVLALAFGLAAIEVLGLIFSIVL). Over 232–238 (YCQMRKK) the chain is Cytoplasmic.

It belongs to the tetraspanin (TM4SF) family. Forms homooligomers. Interacts with MEP1B. Interacts with integrin alpha3/ITGA3. Interacts with RICTOR and MTOR. Interacts with ADAM17. Interacts with ECE1.

The protein resides in the cell membrane. Structural component of specialized membrane microdomains known as tetraspanin-enriched microdomains (TERMs), which act as platforms for receptor clustering and signaling. Participates thereby in diverse biological functions such as cell signal transduction, migration and protein trafficking. Promotes ADAM17-mediated TNF-alpha processing through recruitment of ADAM17 to tetraspanin-enriched micro-domains (TEMs). Forms a complex with RICTOR and integrin alpha3/ITGA3 to mediate mTORC2 activation and AKT1 phosphorylation leading to cell migration. Reduces apoptosis and autophagy induced by high glucose levels through forming a complex with mTOR and RICTOR. Contributes to the maintenance of intestinal epithelial barrier and plays a role in the regulation of intestine inflammation by switching interferon gamma receptor 1/IFNGR1 from clathrin-dependent to lipid raft-dependent endocytosis route to limit STAT1 activation magnitude and duration. Acts as a modulator of the endothelin axis by associating with endothelin converting enzyme ECE1 and regulating its activity of conversion of the endothelin-1 precursor to endothelin. The protein is Tetraspanin-8 (TSPAN8) of Bos taurus (Bovine).